A 288-amino-acid chain; its full sequence is Mortality factor 4-like protein 2 (288 aa).

Polar residues predominate over residues 1 to 15 (MSSRKQASQTRGQQS). The segment at 1-115 (MSSRKQASQT…DPTVESEEAF (115 aa)) is disordered. Phosphoserine is present on Ser-71. The MRG domain occupies 117–288 (SRMEVKVKIP…ASADYHRKAL (172 aa)).

As to quaternary structure, component of the NuA4 histone acetyltransferase complex which contains the catalytic subunit KAT5/TIP60 and the subunits EP400, TRRAP/PAF400, BRD8/SMAP, EPC1, DMAP1/DNMAP1, RUVBL1/TIP49, RUVBL2, ING3, actin, ACTL6A/BAF53A, MORF4L1/MRG15, MORF4L2/MRGX, MRGBP, YEATS4/GAS41 and VPS72/YL1. The NuA4 complex interacts with MYC and the adenovirus E1A protein. MORF4L1 may also participate in the formation of NuA4 related complexes which lack the KAT5/TIP60 catalytic subunit, but which include the SWI/SNF related protein SRCAP. Component of the MSIN3A histone deacetylase complex, which includes SIN3A, HDAC2, ARID4B, MORF4L1, RBBP4/RbAp48, and RBBP7/RbAp46. Interacts with MRFAP1 and RB1. May also interact with one or more as yet undefined members of the TLE (transducin-like enhancer of split) family of transcriptional repressors.

The protein resides in the nucleus. Its function is as follows. Component of the NuA4 histone acetyltransferase complex which is involved in transcriptional activation of select genes principally by acetylation of nucleosomal histone H4 and H2A. This modification may both alter nucleosome - DNA interactions and promote interaction of the modified histones with other proteins which positively regulate transcription. This complex may be required for the activation of transcriptional programs associated with oncogene and proto-oncogene mediated growth induction, tumor suppressor mediated growth arrest and replicative senescence, apoptosis, and DNA repair. The NuA4 complex ATPase and helicase activities seem to be, at least in part, contributed by the association of RUVBL1 and RUVBL2 with EP400. NuA4 may also play a direct role in DNA repair when directly recruited to sites of DNA damage. Also a component of the MSIN3A complex which acts to repress transcription by deacetylation of nucleosomal histones. The protein is Mortality factor 4-like protein 2 (Morf4l2) of Mus musculus (Mouse).